A 267-amino-acid chain; its full sequence is Non-homologous end joining protein Ku (267 aa).

Residues 10–190 form the Ku domain; sequence ISFGLVSFPV…TKYTAKELEL (181 aa).

Belongs to the prokaryotic Ku family. As to quaternary structure, homodimer. Interacts with LigD.

In terms of biological role, with LigD forms a non-homologous end joining (NHEJ) DNA repair enzyme, which repairs dsDNA breaks with reduced fidelity. Binds linear dsDNA with 5'- and 3'- overhangs but not closed circular dsDNA nor ssDNA. Recruits and stimulates the ligase activity of LigD. The chain is Non-homologous end joining protein Ku from Solibacter usitatus (strain Ellin6076).